The sequence spans 583 residues: Chromosomal replication initiator protein DnaA (583 aa).

Residues 1-91 (MSNSNFSIEE…KHVLKTRLDL (91 aa)) are domain I, interacts with DnaA modulators. The segment at 91–241 (LSVSLAITST…SFNDGLDGES (151 aa)) is domain II. The interval 151–239 (KAEQRDGASQ…SSSFNDGLDG (89 aa)) is disordered. Basic and acidic residues predominate over residues 172-182 (EAARRREHDAD). A domain III, AAA+ region region spans residues 242-458 (LLNKNYTFEN…GALIRVTAYC (217 aa)). Gly-286, Gly-288, Lys-289, and Thr-290 together coordinate ATP. The domain IV, binds dsDNA stretch occupies residues 459–583 (ALSHEPLTVE…TQKIKSHARD (125 aa)).

This sequence belongs to the DnaA family. In terms of assembly, oligomerizes as a right-handed, spiral filament on DNA at oriC.

Its subcellular location is the cytoplasm. In terms of biological role, plays an essential role in the initiation and regulation of chromosomal replication. ATP-DnaA binds to the origin of replication (oriC) to initiate formation of the DNA replication initiation complex once per cell cycle. Binds the DnaA box (a 9 base pair repeat at the origin) and separates the double-stranded (ds)DNA. Forms a right-handed helical filament on oriC DNA; dsDNA binds to the exterior of the filament while single-stranded (ss)DNA is stabiized in the filament's interior. The ATP-DnaA-oriC complex binds and stabilizes one strand of the AT-rich DNA unwinding element (DUE), permitting loading of DNA polymerase. After initiation quickly degrades to an ADP-DnaA complex that is not apt for DNA replication. Binds acidic phospholipids. The sequence is that of Chromosomal replication initiator protein DnaA from Corynebacterium jeikeium (strain K411).